Here is a 67-residue protein sequence, read N- to C-terminus: Large ribosomal subunit protein uL30 (67 aa).

It belongs to the universal ribosomal protein uL30 family. As to quaternary structure, part of the 50S ribosomal subunit.

In Sinorhizobium medicae (strain WSM419) (Ensifer medicae), this protein is Large ribosomal subunit protein uL30.